Reading from the N-terminus, the 291-residue chain is Transmembrane protein 41B (291 aa).

Basic and acidic residues predominate over residues 1–11 (MAKGRVAERSQ). The segment at 1–38 (MAKGRVAERSQTEMLHSTPAGDRAVGTQGSAAPGNKDH) is disordered. At T18 the chain carries Phosphothreonine. 6 helical membrane passes run 52-72 (TSLL…FLVY), 109-129 (FYVQ…TFAI), 147-169 (LALF…LSYL), 197-217 (LINY…FINI), 225-245 (PLKV…FVAI), and 262-282 (SWNS…PAIF). The tract at residues 140-251 (GFLYPFPLAL…FVAIKAGTTL (112 aa)) is VTT domain; required for its function in autophagy.

Belongs to the TMEM41 family. Interacts with VMP1. Interacts with COPA, COPB1, VDAC1 and ERLIN2. Interacts with ATG2A. Interacts with SURF4.

The protein localises to the endoplasmic reticulum membrane. Its subcellular location is the endomembrane system. The catalysed reaction is a 1,2-diacyl-sn-glycero-3-phospho-L-serine(in) = a 1,2-diacyl-sn-glycero-3-phospho-L-serine(out). It catalyses the reaction cholesterol(in) = cholesterol(out). The enzyme catalyses a 1,2-diacyl-sn-glycero-3-phosphocholine(in) = a 1,2-diacyl-sn-glycero-3-phosphocholine(out). It carries out the reaction a 1,2-diacyl-sn-glycero-3-phosphoethanolamine(in) = a 1,2-diacyl-sn-glycero-3-phosphoethanolamine(out). Functionally, phospholipid scramblase involved in lipid homeostasis and membrane dynamics processes. Has phospholipid scramblase activity toward cholesterol and phosphatidylserine, as well as phosphatidylethanolamine and phosphatidylcholine. Required for autophagosome formation: participates in early stages of autophagosome biogenesis at the endoplasmic reticulum (ER) membrane by reequilibrating the leaflets of the ER as lipids are extracted by ATG2 (ATG2A or ATG2B) to mediate autophagosome assembly. In addition to autophagy, involved in other processes in which phospholipid scramblase activity is required. Required for normal motor neuron development. The sequence is that of Transmembrane protein 41B from Rattus norvegicus (Rat).